A 332-amino-acid polypeptide reads, in one-letter code: Potassium channel subfamily K member 17 (332 aa).

Residues methionine 1–proline 20 lie on the Cytoplasmic side of the membrane. The helical transmembrane segment at serine 21–leucine 43 threads the bilayer. Residues asparagine 65 and asparagine 94 are each glycosylated (N-linked (GlcNAc...) asparagine). Positions serine 106 to proline 124 form an intramembrane region, pore-forming. Positions 116, 117, 118, and 119 each coordinate K(+). The tract at residues threonine 116–asparagine 121 is selectivity filter 1. The chain crosses the membrane as a helical span at residues alanine 128–leucine 148. At asparagine 149–leucine 179 the chain is on the cytoplasmic side. A helical membrane pass occupies residues alanine 180–phenylalanine 200. The pore-forming intramembrane region spans glycine 211 to glycine 230. K(+)-binding residues include threonine 221, valine 222, glycine 223, and phenylalanine 224. Residues threonine 221–aspartate 226 are selectivity filter 2. The chain crosses the membrane as a helical span at residues methionine 244 to leucine 264. Residues serine 265–serine 332 are Cytoplasmic-facing. Positions serine 287–proline 312 are disordered.

It belongs to the two pore domain potassium channel (TC 1.A.1.8) family. As to quaternary structure, homodimer; disulfide-linked. Heterodimer with KCNK5 and KCNK16. As to expression, widely expressed. Highly expressed in aorta and coronary artery. Expressed in pancreas, in both endocrine (alpha, beta, gamma, delta, and epsilon) and exocrine (acinar and ductal) cells.

The protein resides in the cell membrane. It catalyses the reaction K(+)(in) = K(+)(out). It carries out the reaction Rb(+)(in) = Rb(+)(out). The catalysed reaction is Cs(+)(in) = Cs(+)(out). Inhibited by Ba(2+), quinidine, chloroform and halothane. Activated at alkaline pH. Activated by quinine and isoflurane. Functionally, k(+) channel that conducts voltage-dependent outward rectifying currents upon membrane depolarization. Voltage sensing is coupled to K(+) electrochemical gradient in an 'ion flux gating' mode where outward but not inward ion flow opens the gate. Homo- and heterodimerizes to form functional channels with distinct regulatory and gating properties. Present in the cardiac conduction system where it may regulate action potential duration and beating frequency of cardiac myocytes. Permeable to other monovalent cations such as Rb(+) and Cs(+). The sequence is that of Potassium channel subfamily K member 17 from Homo sapiens (Human).